A 229-amino-acid polypeptide reads, in one-letter code: Casparian strip membrane protein 1 (229 aa).

Residues 1-67 (MSTSEAGAAA…FRRADRGSRC (67 aa)) lie on the Cytoplasmic side of the membrane. A helical membrane pass occupies residues 68–88 (VALLDFVLRVAAFGPALAAAI). The Extracellular portion of the chain corresponds to 89 to 115 (ATGTSDETLSVFTQFFQFHARFDDFPA). A helical membrane pass occupies residues 116 to 136 (LLFFMVANAIAAGYLVLSLPF). Over 137 to 157 (SAVIVLRPQAIGLRHLLLVCD) the chain is Cytoplasmic. Residues 158–178 (MIIAALLTAAAAAAAAIVDLA) traverse the membrane as a helical segment. Topologically, residues 179–205 (HSGNLRANWVPICMQFHGFCQRTSGAV) are extracellular. Residues 206–226 (VGSFLAVLVLLFLVILAAFAI) traverse the membrane as a helical segment. Over 227–229 (RKR) the chain is Cytoplasmic.

It belongs to the Casparian strip membrane proteins (CASP) family. In terms of assembly, homodimer and heterodimers.

It is found in the cell membrane. Its function is as follows. Regulates membrane-cell wall junctions and localized cell wall deposition. Required for establishment of the Casparian strip membrane domain (CSD) and the subsequent formation of Casparian strips, a cell wall modification of the root endodermis that determines an apoplastic barrier between the intraorganismal apoplasm and the extraorganismal apoplasm and prevents lateral diffusion. The protein is Casparian strip membrane protein 1 of Sorghum bicolor (Sorghum).